The following is a 187-amino-acid chain: UPF0200 protein APE_1753.1 (187 aa).

13 to 20 (GLPGSGKS) is an ATP binding site.

Belongs to the UPF0200 family.

The sequence is that of UPF0200 protein APE_1753.1 from Aeropyrum pernix (strain ATCC 700893 / DSM 11879 / JCM 9820 / NBRC 100138 / K1).